Consider the following 120-residue polypeptide: Large ribosomal subunit protein bL20 (120 aa).

The protein belongs to the bacterial ribosomal protein bL20 family.

Functionally, binds directly to 23S ribosomal RNA and is necessary for the in vitro assembly process of the 50S ribosomal subunit. It is not involved in the protein synthesizing functions of that subunit. This Cereibacter sphaeroides (strain ATCC 17029 / ATH 2.4.9) (Rhodobacter sphaeroides) protein is Large ribosomal subunit protein bL20.